The following is a 464-amino-acid chain: ATP synthase subunit beta (464 aa).

150 to 157 (GGAGVGKT) is an ATP binding site.

It belongs to the ATPase alpha/beta chains family. In terms of assembly, F-type ATPases have 2 components, CF(1) - the catalytic core - and CF(0) - the membrane proton channel. CF(1) has five subunits: alpha(3), beta(3), gamma(1), delta(1), epsilon(1). CF(0) has three main subunits: a(1), b(2) and c(9-12). The alpha and beta chains form an alternating ring which encloses part of the gamma chain. CF(1) is attached to CF(0) by a central stalk formed by the gamma and epsilon chains, while a peripheral stalk is formed by the delta and b chains.

It localises to the cell membrane. It carries out the reaction ATP + H2O + 4 H(+)(in) = ADP + phosphate + 5 H(+)(out). In terms of biological role, produces ATP from ADP in the presence of a proton gradient across the membrane. The catalytic sites are hosted primarily by the beta subunits. The protein is ATP synthase subunit beta of Dehalococcoides mccartyi (strain ATCC BAA-2266 / KCTC 15142 / 195) (Dehalococcoides ethenogenes (strain 195)).